Here is a 227-residue protein sequence, read N- to C-terminus: General transcription factor 3C polypeptide 6 (227 aa).

The segment at Asp157–Ser227 is disordered. Residues Glu186–Val195 are compositionally biased toward basic and acidic residues. The span at Glu203–Ser227 shows a compositional bias: polar residues.

Belongs to the TFIIIC subunit 6 family. As to quaternary structure, part of the TFIIIC subcomplex TFIIIC2, consisting of six subunits, GTF3C1, GTF3C2, GTF3C3, GTF3C4, GTF3C5 and GTF3C6. Interacts with GTF3C4 and GTF3C5.

Its subcellular location is the nucleus. Its function is as follows. Involved in RNA polymerase III-mediated transcription. Integral, tightly associated component of the DNA-binding TFIIIC2 subcomplex that directly binds tRNA and virus-associated RNA promoters. This chain is General transcription factor 3C polypeptide 6, found in Mus musculus (Mouse).